The sequence spans 410 residues: Subtilisin-like protease CPC735_003880 (410 aa).

A signal peptide spans 1 to 17 (MKLLKSSLLLLLPFVTA). Positions 18–118 (NPIPSEDKDI…VTPDRKVYLA (101 aa)) are excised as a propeptide. Positions 31–118 (RYIVTLKDGI…VTPDRKVYLA (88 aa)) constitute an Inhibitor I9 domain. The Peptidase S8 domain occupies 127-410 (GYNLGHMSSK…IQEMNETVIA (284 aa)). The Charge relay system role is filled by Asp159. N-linked (GlcNAc...) asparagine glycosylation is present at Asn182. The active-site Charge relay system is His191. Residues Asn238, Asn251, and Asn338 are each glycosylated (N-linked (GlcNAc...) asparagine). Ser347 (charge relay system) is an active-site residue. N-linked (GlcNAc...) asparagine glycosylation occurs at Asn405.

Belongs to the peptidase S8 family.

It is found in the secreted. Functionally, secreted subtilisin-like serine protease with keratinolytic activity that contributes to pathogenicity. In Coccidioides posadasii (strain C735) (Valley fever fungus), this protein is Subtilisin-like protease CPC735_003880.